We begin with the raw amino-acid sequence, 1465 residues long: Gag-Pol polyprotein (1465 aa).

Gly2 carries N-myristoyl glycine; by host lipidation. Residues 7–31 form an interaction with Gp41 region; it reads VLSGKKTDELEKVRLRPGGKKKYML. Positions 16-22 match the Nuclear export signal motif; sequence LEKVRLR. The Nuclear localization signal signature appears at 26–32; it reads KKKYMLK. Over residues 105 to 114 the composition is skewed to basic and acidic residues; it reads QRHLAADTEK. Residues 105–129 are disordered; that stretch reads QRHLAADTEKMPATNKPTAPPSGGN. Phosphotyrosine; by host is present on Tyr130. The interaction with human PPIA/CYPA and NUP153 stretch occupies residues 186 to 223; sequence NCVGEHQAAMQIIREIINEEAADWDQQHPSPGPMPAGQ. Residues 274-360 form a dimerization/Multimerization of capsid protein p24 region; that stretch reads YNPTNILDIK…GGPGQKARLM (87 aa). 2 consecutive CCHC-type zinc fingers follow at residues 388-405 and 409-426; these read VTCW…QCRA and QGCW…KCPE. A disordered region spans residues 441–508; it reads ASQLPHDPSA…PRETLQGGDR (68 aa). Residues 484–501 show a composition bias toward basic and acidic residues; it reads DAEKLHADGETTEREPRE. The dimerization of protease stretch occupies residues 513 to 517; that stretch reads PQFSL. The Peptidase A2 domain maps to 532–601; the sequence is VEVLLDTGVD…TPINIFGRNI (70 aa). Asp537 (for protease activity; shared with dimeric partner) is an active-site residue. Dimerization of protease stretches follow at residues 561 to 567 and 600 to 612; these read GIGGFIN and NILN…LNFP. A Reverse transcriptase domain is found at 655–844; it reads EGQLEEAPPT…PPFKWMGYEL (190 aa). Mg(2+) is bound by residues Asp720, Asp795, and Asp796. An RT 'primer grip' region spans residues 837–845; the sequence is FKWMGYELW. The Tryptophan repeat motif signature appears at 1007–1023; that stretch reads WDQWWTDYWQVTWIPEW. One can recognise an RNase H type-1 domain in the interval 1043–1166; sequence LEGRETYYTD…VDHLVSQGIR (124 aa). Positions 1052, 1087, 1107, and 1158 each coordinate Mg(2+). The Integrase-type zinc-finger motif lies at 1172–1213; it reads EKIEPAQEEHEKYHGNVKELVHKFGIPQLVAKQIVNSCDKCQ. Zn(2+) contacts are provided by His1181, His1185, Cys1209, and Cys1212. The Integrase catalytic domain maps to 1222–1373; the sequence is QVNADLGTWQ…TPAERLVNMI (152 aa). Positions 1233, 1285, and 1321 each coordinate Mg(2+). The integrase-type DNA-binding region spans 1392-1439; the sequence is FQVYYREGRDQLWKGPGELLWKGEGAVIIKVGTEIKVVPRRKAKIIRH.

Homotrimer; further assembles as hexamers of trimers. Interacts with gp41 (via C-terminus). Interacts with host CALM1; this interaction induces a conformational change in the Matrix protein, triggering exposure of the myristate group. Interacts with host AP3D1; this interaction allows the polyprotein trafficking to multivesicular bodies during virus assembly. Part of the pre-integration complex (PIC) which is composed of viral genome, matrix protein, Vpr and integrase. In terms of assembly, homodimer; the homodimer further multimerizes as homohexamers or homopentamers. Interacts with human PPIA/CYPA. Interacts with human NUP153. Interacts with host PDZD8; this interaction stabilizes the capsid. Interacts with monkey TRIM5; this interaction destabilizes the capsid. As to quaternary structure, homodimer, whose active site consists of two apposed aspartic acid residues. Heterodimer of p66 RT and p51 RT (RT p66/p51). Heterodimerization of RT is essential for DNA polymerase activity. The overall folding of the subdomains is similar in p66 RT and p51 RT but the spatial arrangements of the subdomains are dramatically different. In terms of assembly, homotetramer; may further associate as a homohexadecamer. Part of the pre-integration complex (PIC) which is composed of viral genome, matrix protein, Vpr and integrase. Interacts with human SMARCB1/INI1 and human PSIP1/LEDGF isoform 1. Interacts with human KPNA3; this interaction might play a role in nuclear import of the pre-integration complex. Interacts with human NUP153; this interaction might play a role in nuclear import of the pre-integration complex. Mg(2+) serves as cofactor. Post-translationally, specific enzymatic cleavages by the viral protease yield mature proteins. The protease is released by autocatalytic cleavage. The polyprotein is cleaved during and after budding, this process is termed maturation. Proteolytic cleavage of p66 RT removes the RNase H domain to yield the p51 RT subunit. Nucleocapsid protein p7 might be further cleaved after virus entry.

It is found in the host cell membrane. Its subcellular location is the host endosome. The protein localises to the host multivesicular body. The protein resides in the virion membrane. It localises to the host nucleus. It is found in the host cytoplasm. Its subcellular location is the virion. The enzyme catalyses Endopeptidase for which the P1 residue is preferably hydrophobic.. It carries out the reaction Endohydrolysis of RNA in RNA/DNA hybrids. Three different cleavage modes: 1. sequence-specific internal cleavage of RNA. Human immunodeficiency virus type 1 and Moloney murine leukemia virus enzymes prefer to cleave the RNA strand one nucleotide away from the RNA-DNA junction. 2. RNA 5'-end directed cleavage 13-19 nucleotides from the RNA end. 3. DNA 3'-end directed cleavage 15-20 nucleotides away from the primer terminus.. It catalyses the reaction 3'-end directed exonucleolytic cleavage of viral RNA-DNA hybrid.. The catalysed reaction is DNA(n) + a 2'-deoxyribonucleoside 5'-triphosphate = DNA(n+1) + diphosphate. Its activity is regulated as follows. Protease: The viral protease is inhibited by many synthetic protease inhibitors (PIs), such as amprenavir, atazanavir, indinavir, loprinavir, nelfinavir, ritonavir and saquinavir. Use of protease inhibitors in tritherapy regimens permit more ambitious therapeutic strategies. Reverse transcriptase/ribonuclease H: RT can be inhibited either by nucleoside RT inhibitors (NRTIs) or by non nucleoside RT inhibitors (NNRTIs). NRTIs act as chain terminators, whereas NNRTIs inhibit DNA polymerization by binding a small hydrophobic pocket near the RT active site and inducing an allosteric change in this region. Classical NRTIs are abacavir, adefovir (PMEA), didanosine (ddI), lamivudine (3TC), stavudine (d4T), tenofovir (PMPA), zalcitabine (ddC), and zidovudine (AZT). Classical NNRTIs are atevirdine (BHAP U-87201E), delavirdine, efavirenz (DMP-266), emivirine (I-EBU), and nevirapine (BI-RG-587). The tritherapies used as a basic effective treatment of AIDS associate two NRTIs and one NNRTI. Its function is as follows. Mediates, with Gag polyprotein, the essential events in virion assembly, including binding the plasma membrane, making the protein-protein interactions necessary to create spherical particles, recruiting the viral Env proteins, and packaging the genomic RNA via direct interactions with the RNA packaging sequence (Psi). Gag-Pol polyprotein may regulate its own translation, by the binding genomic RNA in the 5'-UTR. At low concentration, the polyprotein would promote translation, whereas at high concentration, the polyprotein would encapsidate genomic RNA and then shut off translation. In terms of biological role, targets the polyprotein to the plasma membrane via a multipartite membrane-binding signal, that includes its myristoylated N-terminus. Matrix protein is part of the pre-integration complex. Implicated in the release from host cell mediated by Vpu. Binds to RNA. Functionally, forms the conical core that encapsulates the genomic RNA-nucleocapsid complex in the virion. Most core are conical, with only 7% tubular. The core is constituted by capsid protein hexamer subunits. The core is disassembled soon after virion entry. Host restriction factors such as TRIM5-alpha or TRIMCyp bind retroviral capsids and cause premature capsid disassembly, leading to blocks in reverse transcription. Capsid restriction by TRIM5 is one of the factors which restricts HIV-1 to the human species. Host PIN1 apparently facilitates the virion uncoating. On the other hand, interactions with PDZD8 or CYPA stabilize the capsid. Encapsulates and protects viral dimeric unspliced genomic RNA (gRNA). Binds these RNAs through its zinc fingers. Acts as a nucleic acid chaperone which is involved in rearangement of nucleic acid secondary structure during gRNA retrotranscription. Also facilitates template switch leading to recombination. As part of the polyprotein, participates in gRNA dimerization, packaging, tRNA incorporation and virion assembly. Its function is as follows. Aspartyl protease that mediates proteolytic cleavages of Gag and Gag-Pol polyproteins during or shortly after the release of the virion from the plasma membrane. Cleavages take place as an ordered, step-wise cascade to yield mature proteins. This process is called maturation. Displays maximal activity during the budding process just prior to particle release from the cell. Also cleaves Nef and Vif, probably concomitantly with viral structural proteins on maturation of virus particles. Hydrolyzes host EIF4GI and PABP1 in order to shut off the capped cellular mRNA translation. The resulting inhibition of cellular protein synthesis serves to ensure maximal viral gene expression and to evade host immune response. In terms of biological role, multifunctional enzyme that converts the viral RNA genome into dsDNA in the cytoplasm, shortly after virus entry into the cell. This enzyme displays a DNA polymerase activity that can copy either DNA or RNA templates, and a ribonuclease H (RNase H) activity that cleaves the RNA strand of RNA-DNA heteroduplexes in a partially processive 3' to 5' endonucleasic mode. Conversion of viral genomic RNA into dsDNA requires many steps. A tRNA(3)-Lys binds to the primer-binding site (PBS) situated at the 5'-end of the viral RNA. RT uses the 3' end of the tRNA primer to perform a short round of RNA-dependent minus-strand DNA synthesis. The reading proceeds through the U5 region and ends after the repeated (R) region which is present at both ends of viral RNA. The portion of the RNA-DNA heteroduplex is digested by the RNase H, resulting in a ssDNA product attached to the tRNA primer. This ssDNA/tRNA hybridizes with the identical R region situated at the 3' end of viral RNA. This template exchange, known as minus-strand DNA strong stop transfer, can be either intra- or intermolecular. RT uses the 3' end of this newly synthesized short ssDNA to perform the RNA-dependent minus-strand DNA synthesis of the whole template. RNase H digests the RNA template except for two polypurine tracts (PPTs) situated at the 5'-end and near the center of the genome. It is not clear if both polymerase and RNase H activities are simultaneous. RNase H probably can proceed both in a polymerase-dependent (RNA cut into small fragments by the same RT performing DNA synthesis) and a polymerase-independent mode (cleavage of remaining RNA fragments by free RTs). Secondly, RT performs DNA-directed plus-strand DNA synthesis using the PPTs that have not been removed by RNase H as primers. PPTs and tRNA primers are then removed by RNase H. The 3' and 5' ssDNA PBS regions hybridize to form a circular dsDNA intermediate. Strand displacement synthesis by RT to the PBS and PPT ends produces a blunt ended, linear dsDNA copy of the viral genome that includes long terminal repeats (LTRs) at both ends. Functionally, catalyzes viral DNA integration into the host chromosome, by performing a series of DNA cutting and joining reactions. This enzyme activity takes place after virion entry into a cell and reverse transcription of the RNA genome in dsDNA. The first step in the integration process is 3' processing. This step requires a complex comprising the viral genome, matrix protein, Vpr and integrase. This complex is called the pre-integration complex (PIC). The integrase protein removes 2 nucleotides from each 3' end of the viral DNA, leaving recessed CA OH's at the 3' ends. In the second step, the PIC enters cell nucleus. This process is mediated through integrase and Vpr proteins, and allows the virus to infect a non dividing cell. This ability to enter the nucleus is specific of lentiviruses, other retroviruses cannot and rely on cell division to access cell chromosomes. In the third step, termed strand transfer, the integrase protein joins the previously processed 3' ends to the 5' ends of strands of target cellular DNA at the site of integration. The 5'-ends are produced by integrase-catalyzed staggered cuts, 5 bp apart. A Y-shaped, gapped, recombination intermediate results, with the 5'-ends of the viral DNA strands and the 3' ends of target DNA strands remaining unjoined, flanking a gap of 5 bp. The last step is viral DNA integration into host chromosome. This involves host DNA repair synthesis in which the 5 bp gaps between the unjoined strands are filled in and then ligated. Since this process occurs at both cuts flanking the HIV genome, a 5 bp duplication of host DNA is produced at the ends of HIV-1 integration. Alternatively, Integrase may catalyze the excision of viral DNA just after strand transfer, this is termed disintegration. This Human immunodeficiency virus type 2 subtype B (isolate D205) (HIV-2) protein is Gag-Pol polyprotein (gag-pol).